The sequence spans 276 residues: Large ribosomal subunit protein uL2c (276 aa).

A disordered region spans residues 223–254 (VVKNPIDHPHGGGEGRSPIGRAKPVTPWGQPA).

Belongs to the universal ribosomal protein uL2 family. Part of the 50S ribosomal subunit.

The protein localises to the plastid. It localises to the chloroplast. The sequence is that of Large ribosomal subunit protein uL2c (rpl2) from Emiliania huxleyi (Coccolithophore).